The primary structure comprises 183 residues: Translation initiation factor IF-3 (183 aa).

Belongs to the IF-3 family. As to quaternary structure, monomer.

Its subcellular location is the cytoplasm. Its function is as follows. IF-3 binds to the 30S ribosomal subunit and shifts the equilibrium between 70S ribosomes and their 50S and 30S subunits in favor of the free subunits, thus enhancing the availability of 30S subunits on which protein synthesis initiation begins. The sequence is that of Translation initiation factor IF-3 from Pseudomonas fluorescens (strain SBW25).